Here is a 325-residue protein sequence, read N- to C-terminus: Elongation factor P--(R)-beta-lysine ligase (325 aa).

S76 to E78 provides a ligand contact to substrate. ATP contacts are provided by residues R100–E102 and N109. Substrate is bound at residue Y118. E244–L245 is an ATP binding site. E251 contributes to the substrate binding site. G300 serves as a coordination point for ATP.

The protein belongs to the class-II aminoacyl-tRNA synthetase family. EpmA subfamily. Homodimer.

It carries out the reaction D-beta-lysine + L-lysyl-[protein] + ATP = N(6)-((3R)-3,6-diaminohexanoyl)-L-lysyl-[protein] + AMP + diphosphate + H(+). In terms of biological role, with EpmB is involved in the beta-lysylation step of the post-translational modification of translation elongation factor P (EF-P) on 'Lys-34'. Catalyzes the ATP-dependent activation of (R)-beta-lysine produced by EpmB, forming a lysyl-adenylate, from which the beta-lysyl moiety is then transferred to the epsilon-amino group of EF-P 'Lys-34'. The polypeptide is Elongation factor P--(R)-beta-lysine ligase (Salmonella agona (strain SL483)).